The sequence spans 670 residues: Solute carrier organic anion transporter family member 1A4 (670 aa).

At 1–20 the chain is on the cytoplasmic side; sequence MGKSEKEVATHGVRCFSKIK. A helical membrane pass occupies residues 21 to 40; it reads AFLLALTCAYVSKSLSGTYM. The Extracellular segment spans residues 41–59; it reads NSMLTQIERQFGIPTSVVG. The chain crosses the membrane as a helical span at residues 60-80; that stretch reads LINGSFEIGNLLLIIFVSYFG. At 81–86 the chain is on the cytoplasmic side; sequence TKLHRP. The chain crosses the membrane as a helical span at residues 87–111; that stretch reads IMIGVGCAVMGLGCFLISIPHFLMG. Over 112 to 155 the chain is Extracellular; that stretch reads RYEYETTILPTSNLSSNSFVCTENRTQTLKPTQDPTECVKEMKS. N-linked (GlcNAc...) asparagine glycans are attached at residues N124 and N135. Residues 156 to 184 traverse the membrane as a helical segment; it reads LMWIYVLVGNIIRGMGETPIMPLGISYIE. The Cytoplasmic segment spans residues 185–203; sequence DFAKSENSPLYIGILETGM. The helical transmembrane segment at 204–224 threads the bilayer; the sequence is TIGPLIGLLLGSSCANIYVDT. Residues 225–242 are Extracellular-facing; sequence GSVNTDDLTITPTDTRWV. The helical transmembrane segment at 243-267 threads the bilayer; that stretch reads GAWWIGFLVCAGVNILTSIPFFFFP. Residues 268–311 are Cytoplasmic-facing; sequence KTLLKEGLQDNGDGTENAKEEKHREKIKEENRGITKDFFLFMKS. The helical transmembrane segment at 312-333 threads the bilayer; that stretch reads LSCNPIYMIFILISVIQVNAFI. Topologically, residues 334 to 353 are extracellular; the sequence is NSFTFMPKYLEQQYGKSTAE. A helical membrane pass occupies residues 354–377; that stretch reads IVFLMGLYMLPPICLGYLIGGLIM. At 378–381 the chain is on the cytoplasmic side; sequence KKFK. A helical membrane pass occupies residues 382–405; that stretch reads ITVKKAAYIGFWLSLTEYLLSFVS. Topologically, residues 406-513 are extracellular; that stretch reads YIMTCDNFPV…PECANKLQYF (108 aa). Residues 433–488 enclose the Kazal-like domain; it reads NNVLADCNTKCSCLTNTWDPVCGDNGLSYMSACLAGCEKSVGTGTNMVFQNCSCIQ. Cystine bridges form between C439–C469, C445–C465, and C454–C486. N-linked (GlcNAc...) asparagine glycosylation is found at N483 and N492. A helical transmembrane segment spans residues 514–536; that stretch reads LIISIIGCFIFSLGAIPGYMVLL. Topologically, residues 537 to 545 are cytoplasmic; it reads RCMKSEEKS. Residues 546–571 traverse the membrane as a helical segment; sequence LGVGLHTFCMRILGGIPAPIYFGALI. At 572–605 the chain is on the extracellular side; that stretch reads DRTCLHWGTLKCGEPGACRMYDINSFRRIYLGLP. A helical transmembrane segment spans residues 606–623; the sequence is AALRGASFLPALFILILM. At 624-670 the chain is on the cytoplasmic side; it reads RKFQFPGDIDSSDTDPAEMKLTAKESKCTNVHRSPTMQNDGERKTKL. 2 positions are modified to phosphoserine: S634 and S635. Positions 649–670 are disordered; the sequence is SKCTNVHRSPTMQNDGERKTKL. Positions 651 to 662 are enriched in polar residues; the sequence is CTNVHRSPTMQN.

It belongs to the organo anion transporter (TC 2.A.60) family. Highly expressed in brain and liver. Detected at very low levels in heart and lung.

The protein resides in the cell membrane. The enzyme catalyses estrone 3-sulfate(out) = estrone 3-sulfate(in). It carries out the reaction taurocholate(out) = taurocholate(in). The catalysed reaction is prostaglandin E2(out) = prostaglandin E2(in). It catalyses the reaction L-thyroxine(out) = L-thyroxine(in). In terms of biological role, mediates the Na(+)-independent transport of organic anions such as taurocholate, cholate, 17-beta-glucuronosyl estradiol, prostaglandin E2, estrone 3-sulfate, L-thyroxine (T4), the cardiac glycosides ouabain and digoxin and thyroid hormones. Shows a pH-sensitive substrate specificity which may be ascribed to the protonation state of the binding site and leads to a stimulation of substrate transport in an acidic microenvironment. Hydrogencarbonate/HCO3(-) acts as the probable counteranion that exchanges for organic anions. The polypeptide is Solute carrier organic anion transporter family member 1A4 (Slco1a4) (Mus musculus (Mouse)).